A 233-amino-acid chain; its full sequence is Aspartate/glutamate leucyltransferase (233 aa).

This sequence belongs to the R-transferase family. Bpt subfamily.

It is found in the cytoplasm. The enzyme catalyses N-terminal L-glutamyl-[protein] + L-leucyl-tRNA(Leu) = N-terminal L-leucyl-L-glutamyl-[protein] + tRNA(Leu) + H(+). It catalyses the reaction N-terminal L-aspartyl-[protein] + L-leucyl-tRNA(Leu) = N-terminal L-leucyl-L-aspartyl-[protein] + tRNA(Leu) + H(+). In terms of biological role, functions in the N-end rule pathway of protein degradation where it conjugates Leu from its aminoacyl-tRNA to the N-termini of proteins containing an N-terminal aspartate or glutamate. The protein is Aspartate/glutamate leucyltransferase of Vibrio parahaemolyticus serotype O3:K6 (strain RIMD 2210633).